The sequence spans 240 residues: Cysteine-rich venom protein ablomin (240 aa).

The signal sequence occupies residues 1 to 19 (MIVFIVLPILAAVLQQSSG). The SCP domain maps to 38 to 166 (VDLHNSLRRS…EYSYFYVCQY (129 aa)). Disulfide bonds link Cys-75–Cys-153, Cys-92–Cys-167, Cys-148–Cys-164, Cys-186–Cys-193, Cys-189–Cys-198, Cys-202–Cys-235, Cys-211–Cys-229, and Cys-220–Cys-233. The ShKT domain occupies 202-235 (CTQEDVFTNCNSLVQQSNCQHNYIKTNCPASCFC).

It belongs to the CRISP family. In terms of tissue distribution, expressed by the venom gland.

The protein resides in the secreted. Blocks contraction of smooth muscle elicited by high potassium-induced depolarization, but does not block caffeine-stimulated contraction. Since high potassium-treatment activates voltage-gated channels and caffeine exposure activates ryanodine receptors, this toxin may target L-type voltage-gated calcium channels (Cav) (and not ryanodine receptors) on smooth muscle. This toxin also shows a little inhibition on cyclic nucleotide-gated CNGA1 channel. In Gloydius blomhoffii (Mamushi), this protein is Cysteine-rich venom protein ablomin.